Consider the following 230-residue polypeptide: Protein-L-isoaspartate O-methyltransferase (230 aa).

Ser68 is an active-site residue.

Belongs to the methyltransferase superfamily. L-isoaspartyl/D-aspartyl protein methyltransferase family.

The protein resides in the cytoplasm. It carries out the reaction [protein]-L-isoaspartate + S-adenosyl-L-methionine = [protein]-L-isoaspartate alpha-methyl ester + S-adenosyl-L-homocysteine. Its function is as follows. Catalyzes the methyl esterification of L-isoaspartyl residues in peptides and proteins that result from spontaneous decomposition of normal L-aspartyl and L-asparaginyl residues. It plays a role in the repair and/or degradation of damaged proteins. In Salinibacter ruber (strain DSM 13855 / M31), this protein is Protein-L-isoaspartate O-methyltransferase.